The primary structure comprises 527 residues: Peptide chain release factor 3 (527 aa).

Positions 9 to 277 constitute a tr-type G domain; it reads AKRRTFAIIS…AVVDWAPLPL (269 aa). Residues 18–25, 86–90, and 140–143 each bind GTP; these read SHPDAGKT, DTPGH, and NKLD.

Belongs to the TRAFAC class translation factor GTPase superfamily. Classic translation factor GTPase family. PrfC subfamily.

The protein localises to the cytoplasm. Increases the formation of ribosomal termination complexes and stimulates activities of RF-1 and RF-2. It binds guanine nucleotides and has strong preference for UGA stop codons. It may interact directly with the ribosome. The stimulation of RF-1 and RF-2 is significantly reduced by GTP and GDP, but not by GMP. The protein is Peptide chain release factor 3 of Pseudomonas fluorescens (strain ATCC BAA-477 / NRRL B-23932 / Pf-5).